The following is a 203-amino-acid chain: Ras-like protein family member 10B (203 aa).

Residues Met-1–Met-203 form a small GTPase-like region. Position 11–18 (Gly-11–Ser-18) interacts with GTP. The Effector region motif lies at Cys-33–Tyr-42. GTP is bound by residues Asp-59 to Pro-62 and Asn-128 to Asp-131. A Cysteine methyl ester modification is found at Cys-200. A lipid anchor (S-geranylgeranyl cysteine) is attached at Cys-200. Residues Ala-201 to Met-203 constitute a propeptide, removed in mature form.

Belongs to the small GTPase superfamily. Ras family. In terms of assembly, interacts with CADPS. As to expression, expressed at high levels in skeletal muscle and, at much lower levels, in heart, brain and pancreas.

It is found in the cell membrane. The catalysed reaction is GTP + H2O = GDP + phosphate + H(+). In terms of biological role, may facilitate the release of atrial natriuretic peptide by cardiomyocytes and hence play a role in the regulation of arterial pressure. This Homo sapiens (Human) protein is Ras-like protein family member 10B (RASL10B).